The following is a 409-amino-acid chain: MAVNLVAPAADSLLPIDGVDLGWAEAGIRKANRKDVLLVRIAEGASVAGVFTQNRFCAAPVQVCREHLASGQGARAIVVNTGNANAGTGAPGLALARQTCEAVAGLLGIAPQQVLPFSTGVILEPLPVDRLIAGLPAAQANAKPDNWLAAAESIMTTDTVPKAASGTCTLSGKPVRLSGISKGAGMIRPNMATMLGFIATDANVDEAVLQGLVRHAADHSFNSVTVDGDTSTNDSFVVIATGRAGTPRIDSESHPDYAALRDALTGLAQALAQKIVRDGEGATKFMTIRVEGGRSVDECRQVAYAVAHSPLVKTAFYASDPNLGRILAAVGYAGVNDLDVDGVNLWLDDVWVARDGGRNPDYREEDGQRVMKQAEITVRIALGRGDATATVWTCDFSHDYVSINADYRS.

Positions 156, 182, 193, 280, 404, and 409 each coordinate substrate. T193 acts as the Nucleophile in catalysis.

Belongs to the ArgJ family. In terms of assembly, heterotetramer of two alpha and two beta chains.

It localises to the cytoplasm. The enzyme catalyses N(2)-acetyl-L-ornithine + L-glutamate = N-acetyl-L-glutamate + L-ornithine. It catalyses the reaction L-glutamate + acetyl-CoA = N-acetyl-L-glutamate + CoA + H(+). It participates in amino-acid biosynthesis; L-arginine biosynthesis; L-ornithine and N-acetyl-L-glutamate from L-glutamate and N(2)-acetyl-L-ornithine (cyclic): step 1/1. Its pathway is amino-acid biosynthesis; L-arginine biosynthesis; N(2)-acetyl-L-ornithine from L-glutamate: step 1/4. Catalyzes two activities which are involved in the cyclic version of arginine biosynthesis: the synthesis of N-acetylglutamate from glutamate and acetyl-CoA as the acetyl donor, and of ornithine by transacetylation between N(2)-acetylornithine and glutamate. This Ralstonia nicotianae (strain ATCC BAA-1114 / GMI1000) (Ralstonia solanacearum) protein is Arginine biosynthesis bifunctional protein ArgJ.